The primary structure comprises 102 residues: Keratin-associated protein 25-1 (102 aa).

Belongs to the PMG family. In terms of assembly, interacts with hair keratins.

In the hair cortex, hair keratin intermediate filaments are embedded in an interfilamentous matrix, consisting of hair keratin-associated proteins (KRTAP), which are essential for the formation of a rigid and resistant hair shaft through their extensive disulfide bond cross-linking with abundant cysteine residues of hair keratins. The matrix proteins include the high-sulfur and high-glycine-tyrosine keratins. This Homo sapiens (Human) protein is Keratin-associated protein 25-1 (KRTAP25-1).